The primary structure comprises 252 residues: Indole-3-glycerol phosphate synthase (252 aa).

It belongs to the TrpC family.

It catalyses the reaction 1-(2-carboxyphenylamino)-1-deoxy-D-ribulose 5-phosphate + H(+) = (1S,2R)-1-C-(indol-3-yl)glycerol 3-phosphate + CO2 + H2O. It participates in amino-acid biosynthesis; L-tryptophan biosynthesis; L-tryptophan from chorismate: step 4/5. This Listeria monocytogenes serovar 1/2a (strain ATCC BAA-679 / EGD-e) protein is Indole-3-glycerol phosphate synthase.